Here is a 172-residue protein sequence, read N- to C-terminus: Transmembrane protein 91 (172 aa).

Residues 1–97 lie on the Extracellular side of the membrane; sequence MDNSSIQELQ…SPLLPHDHLG (97 aa). The disordered stretch occupies residues 60 to 86; sequence GLGEPETPDFEDTLSSDSDSDDDGGDR. Residues 65–83 show a composition bias toward acidic residues; the sequence is ETPDFEDTLSSDSDSDDDG. A helical transmembrane segment spans residues 98-118; that stretch reads LAVFSVLCCFWPVGIAAFCLA. Residues 119–139 are Cytoplasmic-facing; that stretch reads HKTNKAWAKGDVQGAGAASRR. Residues 140-160 traverse the membrane as a helical segment; it reads AFLLGVLAVGLGLCTYAAALV. Residues 161 to 172 lie on the Extracellular side of the membrane; it reads TLAAYLASRDPP.

This sequence belongs to the CD225/Dispanin family.

It localises to the membrane. This chain is Transmembrane protein 91 (Tmem91), found in Mus musculus (Mouse).